The chain runs to 109 residues: MSNFWNAFSVYNKDKHSANSKIYGSNHMNLSTGTTTYLHSNEYREPTSKDVKDGNEMEKQRRMSESSLDSSKRRVSQSTIDDISKLSQGEFKEIYQSLRKGEPSNKVNF.

Residues 37–81 (YLHSNEYREPTSKDVKDGNEMEKQRRMSESSLDSSKRRVSQSTID) form a disordered region. Positions 41-64 (NEYREPTSKDVKDGNEMEKQRRMS) are enriched in basic and acidic residues.

It belongs to the SPG4 family.

In terms of biological role, stationary phase-essential protein not required for growth on nonfermentable carbon sources. In Vanderwaltozyma polyspora (strain ATCC 22028 / DSM 70294 / BCRC 21397 / CBS 2163 / NBRC 10782 / NRRL Y-8283 / UCD 57-17) (Kluyveromyces polysporus), this protein is Stationary phase protein 4 (SPG4).